The sequence spans 323 residues: Acetyl-coenzyme A carboxylase carboxyl transferase subunit alpha (323 aa).

Residues 40–293 form the CoA carboxyltransferase C-terminal domain; that stretch reads LAEKSLQLTK…RKALAESLKT (254 aa).

It belongs to the AccA family. As to quaternary structure, acetyl-CoA carboxylase is a heterohexamer composed of biotin carboxyl carrier protein (AccB), biotin carboxylase (AccC) and two subunits each of ACCase subunit alpha (AccA) and ACCase subunit beta (AccD).

It is found in the cytoplasm. The enzyme catalyses N(6)-carboxybiotinyl-L-lysyl-[protein] + acetyl-CoA = N(6)-biotinyl-L-lysyl-[protein] + malonyl-CoA. Its pathway is lipid metabolism; malonyl-CoA biosynthesis; malonyl-CoA from acetyl-CoA: step 1/1. Component of the acetyl coenzyme A carboxylase (ACC) complex. First, biotin carboxylase catalyzes the carboxylation of biotin on its carrier protein (BCCP) and then the CO(2) group is transferred by the carboxyltransferase to acetyl-CoA to form malonyl-CoA. This chain is Acetyl-coenzyme A carboxylase carboxyl transferase subunit alpha, found in Polynucleobacter necessarius subsp. necessarius (strain STIR1).